A 551-amino-acid chain; its full sequence is Preprotein translocase subunit SCY1, chloroplastic (551 aa).

Residues 1–67 constitute a chloroplast transit peptide; the sequence is MITVSEVSSY…WNLGLVINSR (67 aa). Helical transmembrane passes span 142–162, 192–212, 241–261, 268–288, 295–315, 328–348, 382–402, 415–435, 482–502, and 503–523; these read FLKLLGFLALSRLGIYIPLGG, LGICSLGIVPFINAQIVFQLL, ASVGFAIVQAIGQVFYLRPYV, WVVSSVTLLTLGSVLTTYIGE, LGNGTSLLIFTSIISYLPASF, YTGLGTIVVSFLLLVLGIVYV, SAGVMPIIFSTSSLALPATLA, FALTPGGSFYLPTNILLIAFF, VLGSAFLAVLAAGPAVVEQIT, and HLTAFRGFAGTSVLILVGCAT.

It belongs to the SecY/SEC61-alpha family. As to quaternary structure, part of the Sec protein translocation apparatus. Interacts with SECE1, ALB3 and probably with SECA1.

The protein resides in the plastid. It localises to the chloroplast thylakoid membrane. Involved in protein export. Probably interacts with other proteins to allow the translocation of proteins across the chloroplast thylakoid membranes. Required for normal greening during embryogenesis. Central subunit of the protein translocation channel SecYE. Consists of two halves formed by TMs 1-5 and 6-10. These two domains form a lateral gate at the front which open onto the bilayer between TMs 2 and 7, and are clamped together by SecE at the back. The channel is closed by both a pore ring composed of hydrophobic SecY resides and a short helix (helix 2A) on the extracellular side of the membrane which forms a plug. In Arabidopsis thaliana (Mouse-ear cress), this protein is Preprotein translocase subunit SCY1, chloroplastic (SCY1).